A 118-amino-acid polypeptide reads, in one-letter code: Neutral phospholipase A2 homolog taipoxin beta chain 2 (118 aa).

7 disulfides stabilise this stretch: Cys11/Cys71, Cys27/Cys117, Cys29/Cys45, Cys44/Cys98, Cys51/Cys91, Cys60/Cys84, and Cys78/Cys89.

The protein belongs to the phospholipase A2 family. Group I subfamily. D49 sub-subfamily. Heterotrimer of alpha, beta, and gamma chains; non-covalently linked. As to expression, expressed by the venom gland.

The protein localises to the secreted. Functionally, heterotrimer: Snake venom phospholipase A2 (PLA2) heterotrimer that acts as a potent presynaptic neurotoxin by blocking synaptic transmission and synaptic vesicle recycling. May act by binding in a calcium-dependent fashion to neurotonal pentraxin-1 (NPTX1) and neurotonal pentraxin-2 (NPTX2), but not to neuronal pentraxin receptor (NPTXR). Also binds to taipoxin-associated calcium binding protein 49 (RCN2), a protein localized in the lumen of endoplasmic reticulum. Its function is as follows. Monomer (beta chain): Snake venom phospholipase A2 homolog that is neither toxic nor enzymatically active. Does not bind calcium. The polypeptide is Neutral phospholipase A2 homolog taipoxin beta chain 2 (Oxyuranus scutellatus scutellatus (Australian taipan)).